Reading from the N-terminus, the 406-residue chain is Tyrosine--tRNA ligase (406 aa).

Position 39 (Tyr-39) interacts with L-tyrosine. Residues 44–53 carry the 'HIGH' region motif; sequence PTADSLHVGH. L-tyrosine is bound by residues Tyr-172 and Gln-176. A 'KMSKS' region motif is present at residues 232-236; that stretch reads KMGKT. Lys-235 provides a ligand contact to ATP. The 61-residue stretch at 344 to 404 folds into the S4 RNA-binding domain; it reads KELLDVLVDR…LGKKKFYNIV (61 aa).

The protein belongs to the class-I aminoacyl-tRNA synthetase family. TyrS type 1 subfamily. As to quaternary structure, homodimer.

It is found in the cytoplasm. It carries out the reaction tRNA(Tyr) + L-tyrosine + ATP = L-tyrosyl-tRNA(Tyr) + AMP + diphosphate + H(+). In terms of biological role, catalyzes the attachment of tyrosine to tRNA(Tyr) in a two-step reaction: tyrosine is first activated by ATP to form Tyr-AMP and then transferred to the acceptor end of tRNA(Tyr). This chain is Tyrosine--tRNA ligase, found in Fusobacterium nucleatum subsp. nucleatum (strain ATCC 25586 / DSM 15643 / BCRC 10681 / CIP 101130 / JCM 8532 / KCTC 2640 / LMG 13131 / VPI 4355).